Consider the following 238-residue polypeptide: Phosphoribosylaminoimidazole-succinocarboxamide synthase (238 aa).

It belongs to the SAICAR synthetase family.

The enzyme catalyses 5-amino-1-(5-phospho-D-ribosyl)imidazole-4-carboxylate + L-aspartate + ATP = (2S)-2-[5-amino-1-(5-phospho-beta-D-ribosyl)imidazole-4-carboxamido]succinate + ADP + phosphate + 2 H(+). Its pathway is purine metabolism; IMP biosynthesis via de novo pathway; 5-amino-1-(5-phospho-D-ribosyl)imidazole-4-carboxamide from 5-amino-1-(5-phospho-D-ribosyl)imidazole-4-carboxylate: step 1/2. The protein is Phosphoribosylaminoimidazole-succinocarboxamide synthase (purC) of Pyrococcus horikoshii (strain ATCC 700860 / DSM 12428 / JCM 9974 / NBRC 100139 / OT-3).